A 108-amino-acid polypeptide reads, in one-letter code: Probable 4-amino-4-deoxy-L-arabinose-phosphoundecaprenol flippase subunit ArnE (108 aa).

3 consecutive transmembrane segments (helical) span residues 32 to 52 (PLLLWLGGSVLLLGMAMLVWL), 58 to 78 (VPVGVAYPMLSLNFIFVTLAA), and 85 to 105 (TLSLRHALGVILIVAGVAIMG). Residues 34 to 106 (LLWLGGSVLL…IVAGVAIMGS (73 aa)) enclose the EamA domain.

It belongs to the ArnE family. Heterodimer of ArnE and ArnF.

It localises to the cell inner membrane. The protein operates within bacterial outer membrane biogenesis; lipopolysaccharide biosynthesis. Its function is as follows. Translocates 4-amino-4-deoxy-L-arabinose-phosphoundecaprenol (alpha-L-Ara4N-phosphoundecaprenol) from the cytoplasmic to the periplasmic side of the inner membrane. The chain is Probable 4-amino-4-deoxy-L-arabinose-phosphoundecaprenol flippase subunit ArnE from Erwinia tasmaniensis (strain DSM 17950 / CFBP 7177 / CIP 109463 / NCPPB 4357 / Et1/99).